Consider the following 153-residue polypeptide: ORM1-like protein 3 (153 aa).

An important for ceramide level-sensing region spans residues 1–17; that stretch reads MNVGTAHSEVNPNTRVM. The Cytoplasmic segment spans residues 1 to 21; the sequence is MNVGTAHSEVNPNTRVMNSRG. The next 2 helical transmembrane spans lie at 22–42 and 43–63; these read IWLSYVLAIGLLHVVLLSIPF and VSVPVVWTLTNLIHNTGMYIF. Residues 64-94 are Cytoplasmic-facing; it reads LHTVKGTPFETPDQGKARLLTHWEQMDYGVQ. The helical transmembrane segment at 95 to 117 threads the bilayer; sequence FTASRKFLTITPIVLYFLTSFYT. At 118–121 the chain is on the extracellular side; it reads KYDQ. Residues 122-142 form a helical membrane-spanning segment; that stretch reads IHFVLNTVSLMSVLIPKLPQL. Hydroxyproline is present on Pro137. Residues 143–153 are Cytoplasmic-facing; that stretch reads HGVRIFGINKY.

Belongs to the ORM family. In terms of assembly, ceramide-sensitive subunit of the serine palmitoyltransferase (SPT) complex, which is also composed of SPTLC1, SPTLC2/3 and SPTSSA/B. In terms of processing, when hydroxylated at Pro-137, ubiquitinated via 'Lys-48'-linkage, leading to proteasomal degradation. In endothelial cells, ORMDL3 proteasomal degradation is controlled by the sphingosine 1-phosphate receptor signaling pathway.

It localises to the endoplasmic reticulum membrane. Functionally, plays an essential role in the homeostatic regulation of sphingolipid de novo biosynthesis by modulating the activity of the serine palmitoyltransferase (SPT) in response to ceramide levels. When complexed to SPT, the binding of ceramides to its N-terminus stabilizes a conformation that block SPT substrate entry, hence preventing SPT catalytic activity. Through this mechanism, maintains ceramide levels at sufficient concentrations for the production of complex sphingolipids, but which prevents the accumulation of ceramides to levels that trigger apoptosis. This chain is ORM1-like protein 3 (ORMDL3), found in Ailuropoda melanoleuca (Giant panda).